Reading from the N-terminus, the 521-residue chain is Exoglucanase 1 (521 aa).

Residues 1–17 (MLAKFAALAALVASANA) form the signal peptide. Positions 18 to 450 (QAVCSLTAET…FGPIGSTFSG (433 aa)) are catalytic. N-linked (GlcNAc...) asparagine glycosylation is present at Asn-32. Glu-229 serves as the catalytic Nucleophile. Glu-234 functions as the Proton donor in the catalytic mechanism. An N-linked (GlcNAc...) asparagine glycan is attached at Asn-287. The disordered stretch occupies residues 447-486 (TFSGGSSGTPPSNPSSSVKPVTSTAKPSSTSTASNPSGTG). The segment at 451–485 (GSSGTPPSNPSSSVKPVTSTAKPSSTSTASNPSGT) is linker. The CBM1 domain maps to 485 to 521 (TGAAHWAQCGGIGFSGPTTCQSPYTCQKINDYYSQCV). 2 disulfides stabilise this stretch: Cys-493–Cys-510 and Cys-504–Cys-520.

The protein belongs to the glycosyl hydrolase 7 (cellulase C) family.

It localises to the secreted. The enzyme catalyses Hydrolysis of (1-&gt;4)-beta-D-glucosidic linkages in cellulose and cellotetraose, releasing cellobiose from the non-reducing ends of the chains.. The sequence is that of Exoglucanase 1 (cbh-1) from Neurospora crassa (strain ATCC 24698 / 74-OR23-1A / CBS 708.71 / DSM 1257 / FGSC 987).